The following is a 123-amino-acid chain: Holo-[acyl-carrier-protein] synthase (123 aa).

2 residues coordinate Mg(2+): aspartate 7 and glutamate 56.

The protein belongs to the P-Pant transferase superfamily. AcpS family. Requires Mg(2+) as cofactor.

It localises to the cytoplasm. The catalysed reaction is apo-[ACP] + CoA = holo-[ACP] + adenosine 3',5'-bisphosphate + H(+). Its function is as follows. Transfers the 4'-phosphopantetheine moiety from coenzyme A to a Ser of acyl-carrier-protein. The protein is Holo-[acyl-carrier-protein] synthase of Carboxydothermus hydrogenoformans (strain ATCC BAA-161 / DSM 6008 / Z-2901).